The primary structure comprises 648 residues: Replication restart protein PriA (648 aa).

The 167-residue stretch at 131 to 297 (TIFNESNKPT…KTHKYQLVTL (167 aa)) folds into the Helicase ATP-binding domain. ATP is bound at residue 144–151 (GVTGSGKT). The short motif at 240–243 (DEEH) is the DEAH box element. C358, C361, C367, C370, C385, C388, C398, and C401 together coordinate Zn(2+). Positions 393–548 (KIFSSCPECL…SFFTNELEIR (156 aa)) constitute a Helicase C-terminal domain.

The protein belongs to the helicase family. PriA subfamily. In terms of assembly, component of the replication restart primosome. It depends on Zn(2+) as a cofactor.

It catalyses the reaction Couples ATP hydrolysis with the unwinding of duplex DNA by translocating in the 3'-5' direction.. The catalysed reaction is ATP + H2O = ADP + phosphate + H(+). Initiates the restart of stalled replication forks, which reloads the replicative helicase on sites other than the origin of replication. Recognizes and binds to abandoned replication forks and remodels them to uncover a helicase loading site. Promotes assembly of the primosome at these replication forks. This Rickettsia typhi (strain ATCC VR-144 / Wilmington) protein is Replication restart protein PriA.